A 57-amino-acid chain; its full sequence is Potassium channel toxin alpha-KTx 8.8 (57 aa).

Residues Met1 to Thr19 form the signal peptide. Positions Ile20–Val28 are excised as a propeptide. 3 cysteine pairs are disulfide-bonded: Cys31/Cys47, Cys34/Cys52, and Cys38/Cys54.

This sequence belongs to the short scorpion toxin superfamily. Potassium channel inhibitor family. Alpha-KTx 08 subfamily. Post-translationally, contains 3 disulfide bonds. In terms of tissue distribution, expressed by the venom gland.

The protein resides in the secreted. Selectively inhibits voltage-gated potassium channels rKv1.2/KCNA2 (IC(50)=331 nM) and hKv1.3/KCNA3 (IC(50)=503 nM). Partially inihibts rKv1.6/KCNA6 (IC(50)=9983 nM). This is Potassium channel toxin alpha-KTx 8.8 from Orthochirus scrobiculosus (Central Asian scorpion).